Consider the following 93-residue polypeptide: Small ribosomal subunit protein bS16 (93 aa).

The protein belongs to the bacterial ribosomal protein bS16 family.

The sequence is that of Small ribosomal subunit protein bS16 from Roseiflexus castenholzii (strain DSM 13941 / HLO8).